Consider the following 999-residue polypeptide: Hypoxia up-regulated protein 1 (999 aa).

An N-terminal signal peptide occupies residues 1–32 (MAATVRRQRPRRLLCWALVAVLLADLLALSDT). N-linked (GlcNAc...) asparagine glycans are attached at residues N155, N222, and N515. The segment at 564 to 694 (VEDSPEEEST…KKQKPARKQK (131 aa)) is disordered. Residue S567 is modified to Phosphoserine. Over residues 574–583 (LTKLGNTISS) the composition is skewed to polar residues. N596 carries an N-linked (GlcNAc...) asparagine glycan. 2 stretches are compositionally biased toward basic and acidic residues: residues 611-626 (GSKDEPAEQGELKEEA) and 641-668 (PKGDAAREGETPDEKESGDKSEAQKPNE). N-linked (GlcNAc...) asparagine glycosylation is found at N830, N862, and N869. K883 bears the N6-acetyllysine mark. The disordered stretch occupies residues 909-999 (AKFTKPRPRP…QKRPLKNDEL (91 aa)). N-linked (GlcNAc...) asparagine glycosylation is found at N922 and N931. Residues 949-962 (EEAKAILEPDKEGL) are compositionally biased toward basic and acidic residues. Positions 996 to 999 (NDEL) match the Prevents secretion from ER motif.

The protein belongs to the heat shock protein 70 family. In terms of assembly, part of a large chaperone multiprotein complex comprising DNAJB11, HSP90B1, HSPA5, HYOU, PDIA2, PDIA4, PDIA6, PPIB, SDF2L1, UGGT1 and very small amounts of ERP29, but not, or at very low levels, CALR nor CANX. Selectively expressed by cultured astrocytes but not endothelial cells, microglia or neurons.

The protein resides in the endoplasmic reticulum lumen. Functionally, has a pivotal role in cytoprotective cellular mechanisms triggered by oxygen deprivation. Promotes HSPA5/BiP-mediated ATP nucleotide exchange and thereby activates the unfolded protein response (UPR) pathway in the presence of endoplasmic reticulum stress. May play a role as a molecular chaperone and participate in protein folding. The protein is Hypoxia up-regulated protein 1 (Hyou1) of Rattus norvegicus (Rat).